A 1431-amino-acid polypeptide reads, in one-letter code: Probable serine/threonine-protein kinase irlA (1431 aa).

Residues 1–10 show a composition bias toward basic residues; that stretch reads MTKPIFKSKT. 2 disordered regions span residues 1–81 and 736–879; these read MTKP…EKEE and KREK…NNNK. Over residues 25-43 the composition is skewed to acidic residues; the sequence is NEDEEEEEGGEEGGEEEEI. Positions 46 to 67 are enriched in low complexity; sequence NKNSNNSSSNSNNNNNDNNNNN. Coiled-coil stretches lie at residues 57-97 and 715-759; these read NNNN…LDME and KKRS…NNNN. A compositionally biased stretch (basic and acidic residues) spans 68 to 81; it reads GEERKVEKEEEKEE. Residues 738-749 are compositionally biased toward basic residues; that stretch reads EKKKQKDKKKNK. Over residues 750–776 the composition is skewed to low complexity; that stretch reads SNQNQKNNNNQNNQSNNNKINSPSSNK. The span at 777-791 shows a compositional bias: polar residues; it reads LTQNVTPPSSPVNII. The segment covering 792–812 has biased composition (low complexity); that stretch reads TSSSTTSSSTSSTTSSTTSST. The span at 821–838 shows a compositional bias: polar residues; sequence TLPIKTSSPTKPESQKPS. Residues 854-878 are compositionally biased toward low complexity; the sequence is NNNNNNNNNNNNNNNNNNNNNNNNN. Positions 860-971 form a coiled coil; sequence NNNNNNNNNN…QESIQLNQTL (112 aa). One can recognise a Protein kinase domain in the interval 987–1261; it reads RDENNIIGRG…IDTILNHPLF (275 aa). ATP contacts are provided by residues 993–1001 and K1016; that span reads IGRGSNGTL. Residue D1130 is the Proton acceptor of the active site. A KEN domain is found at 1264 to 1431; that stretch reads TNEKIKFYES…NSKDYLNIKF (168 aa).

The protein belongs to the protein kinase superfamily. Ser/Thr protein kinase family.

It carries out the reaction L-seryl-[protein] + ATP = O-phospho-L-seryl-[protein] + ADP + H(+). It catalyses the reaction L-threonyl-[protein] + ATP = O-phospho-L-threonyl-[protein] + ADP + H(+). The protein is Probable serine/threonine-protein kinase irlA (irlA) of Dictyostelium discoideum (Social amoeba).